Here is a 372-residue protein sequence, read N- to C-terminus: Signal peptide peptidase-like 1 (372 aa).

At 1–6 (METLWT) the chain is on the lumenal side. A helical membrane pass occupies residues 7 to 27 (LLYLLEPAPATLIVTAVTVTF). Over 28 to 54 (ASAFRALNYGKEMERNRDFSEASITLD) the chain is Cytoplasmic. The helical transmembrane segment at 55-77 (SSQALMIPVMSSCSLLLMFYLFS) threads the bilayer. Residues 78 to 81 (SVSQ) are Lumenal-facing. A helical membrane pass occupies residues 82–104 (LLTAFTAIASVSSLFYWLSPYAV). At 105–123 (YMKTQLGLSDPFLSRCCSK) the chain is on the cytoplasmic side. The helical transmembrane segment at 124–146 (SFTRIQGLLLVACAMTVVAWLIS) threads the bilayer. Over 147–149 (GHW) the chain is Lumenal. A helical membrane pass occupies residues 150-167 (VLNNLLGISICIAFVSHV). The Cytoplasmic segment spans residues 168 to 171 (RLPN). The chain crosses the membrane as a helical span at residues 172–192 (IKICAMLLVCLFVYDIFWVFF). D186 is a catalytic residue. Residues 193–257 (SERFFGANVM…GVVPGVSASD (65 aa)) lie on the Lumenal side of the membrane. The helical transmembrane segment at 258-278 (FMMLGLGDMAIPAMLLALVLC) threads the bilayer. Residue D265 is part of the active site. The Cytoplasmic segment spans residues 279–301 (FDHRKTRDVVNIFDLKSSKGHKY). The helical transmembrane segment at 302 to 322 (IWYALPGYAIGLVAALAAGVL) threads the bilayer. The Lumenal portion of the chain corresponds to 323-325 (THS). A helical membrane pass occupies residues 326-346 (PQPALLYLVPSTLGPVIFMSW). Positions 328–330 (PAL) match the PAL motif. Topologically, residues 347–372 (RRKDLAELWEGPALSNPIEKSHEIEI) are cytoplasmic.

The protein belongs to the peptidase A22B family. In terms of tissue distribution, ubiquitous.

The protein resides in the endosome membrane. Intramembrane-cleaving aspartic protease (I-CLiP) that cleaves type II membrane signal peptides in the hydrophobic plane of the membrane. The chain is Signal peptide peptidase-like 1 (SPPL1) from Arabidopsis thaliana (Mouse-ear cress).